Consider the following 161-residue polypeptide: Putative pre-16S rRNA nuclease (161 aa).

Residues 141–161 form a disordered region; the sequence is AAGSPPGALVPRNRVDPDRHA.

This sequence belongs to the YqgF nuclease family.

It is found in the cytoplasm. Could be a nuclease involved in processing of the 5'-end of pre-16S rRNA. The sequence is that of Putative pre-16S rRNA nuclease from Clavibacter michiganensis subsp. michiganensis (strain NCPPB 382).